We begin with the raw amino-acid sequence, 865 residues long: Fatty acyl-CoA synthetase and RNA processing-associated kinase 1 (865 aa).

Residues 41 to 313 form the Protein kinase domain; it reads YILGSTLGEG…LKQIKKHEWL (273 aa). Residues 47 to 55 and lysine 80 contribute to the ATP site; that span reads LGEGEFGKV. The Proton acceptor role is filled by aspartate 175. Residues 341–398 are disordered; the sequence is KPRRRYGSRPQSSCSTSSLGSRSDKRDSLVIDSTLITFPAPPQESQNHIITRPASIAS. Residues 352 to 361 are compositionally biased toward low complexity; it reads SSCSTSSLGS. Residue serine 441 is modified to Phosphoserine. Disordered regions lie at residues 480-554, 673-733, and 754-782; these read ISGS…YTTP, TEES…LNEA, and SLYS…YQTN. Residues 494–538 are compositionally biased toward polar residues; that stretch reads STTMQTSKIQPNNMASSQNHQYNKNKTQNSLQSAKNFYRTSSSSH. 2 stretches are compositionally biased toward basic and acidic residues: residues 690–708 and 724–733; these read EGQE…EKGS and NHLERSLNEA.

The protein belongs to the protein kinase superfamily. Ser/Thr protein kinase family. Interacts with FAA3, POL5 and TPA1.

The protein localises to the cytoplasm. It catalyses the reaction L-seryl-[protein] + ATP = O-phospho-L-seryl-[protein] + ADP + H(+). The enzyme catalyses L-threonyl-[protein] + ATP = O-phospho-L-threonyl-[protein] + ADP + H(+). Its function is as follows. Putative serine/threonine-protein kinase that may be involved in rRNA transcription and ribosome biogenesis. In Saccharomyces cerevisiae (strain ATCC 204508 / S288c) (Baker's yeast), this protein is Fatty acyl-CoA synthetase and RNA processing-associated kinase 1 (FRK1).